Here is a 473-residue protein sequence, read N- to C-terminus: Glutamate--tRNA ligase (473 aa).

The 'HIGH' region signature appears at 11–21 (PSPTGFLHIGG). The short motif at 240–244 (KLSKR) is the 'KMSKS' region element. Position 243 (Lys-243) interacts with ATP.

This sequence belongs to the class-I aminoacyl-tRNA synthetase family. Glutamate--tRNA ligase type 1 subfamily. In terms of assembly, monomer.

It localises to the cytoplasm. The enzyme catalyses tRNA(Glu) + L-glutamate + ATP = L-glutamyl-tRNA(Glu) + AMP + diphosphate. Functionally, catalyzes the attachment of glutamate to tRNA(Glu) in a two-step reaction: glutamate is first activated by ATP to form Glu-AMP and then transferred to the acceptor end of tRNA(Glu). The protein is Glutamate--tRNA ligase of Rhodopseudomonas palustris (strain ATCC BAA-98 / CGA009).